Here is a 182-residue protein sequence, read N- to C-terminus: UPF0301 protein NMCC_1249 (182 aa).

Belongs to the UPF0301 (AlgH) family.

The chain is UPF0301 protein NMCC_1249 from Neisseria meningitidis serogroup C (strain 053442).